The following is a 621-amino-acid chain: Solute carrier family 2, facilitated glucose transporter member 12 (621 aa).

The Cytoplasmic segment spans residues 1–48 (MVPVENTEGPNLLNQKGTAVETEGSYRASGSRHPPWARGCGMFTFLSS). A helical membrane pass occupies residues 49–69 (VTAAVSGLLVGYELGIISGAL). At 70–84 (LQIKTLLTLSCHEQE) the chain is on the extracellular side. A helical transmembrane segment spans residues 85–105 (MVVSSLLIGALLASLTGGVLI). Residues 106–119 (DRYGRRTAIILSSC) are Cytoplasmic-facing. Residues 120–140 (LLGLGSLVLILSLSYTVLIVG) traverse the membrane as a helical segment. Position 141 (Arg-141) is a topological domain, extracellular. The chain crosses the membrane as a helical span at residues 142–162 (IAIGVSISLSSIATCVYIAEI). The Cytoplasmic portion of the chain corresponds to 163 to 176 (APQHRRGLLVSLNE). A helical transmembrane segment spans residues 177-197 (LMIVIGILSAYISNYAFANVF). At 198–201 (HGWK) the chain is on the extracellular side. A helical transmembrane segment spans residues 202–222 (YMFGLVIPLGILQAIAMYFLP). Residues 223–282 (PSPRFLVMKGQEGAASKVLGRLRALSDATEELTVIKSSLKDEYQYSFWDLFRSKDNMRTR) are Cytoplasmic-facing. Residues 283–303 (IMIGLTLVFFVQITGQPNILF) traverse the membrane as a helical segment. Over 304–321 (YASTVLKSVGFQSNEAAS) the chain is Extracellular. Residues 322-342 (LASTGVGVVKVISTIPATLLV) form a helical membrane-spanning segment. Residues 343-349 (DHVGSKT) are Cytoplasmic-facing. Residues 350–370 (FLCIGSSVMAASLVTMGIVNL) traverse the membrane as a helical segment. Over 371–470 (NIHMNFTNIC…PAFLKWLSLA (100 aa)) the chain is Extracellular. Residues Asn-375, Asn-387, Asn-400, and Asn-405 are each glycosylated (N-linked (GlcNAc...) asparagine). Residues 471-491 (SLLVYVAAFSIGLGPMPWLVL) form a helical membrane-spanning segment. Topologically, residues 492–502 (SEIFPGGIRGR) are cytoplasmic. The helical transmembrane segment at 503–523 (AMALTSSMNWGINLLISLTFL) threads the bilayer. Residues 524–532 (TVTDLIGLP) lie on the Extracellular side of the membrane. Residues 533–553 (WVCFIYTIMSLASLLFVVMFI) traverse the membrane as a helical segment. The Cytoplasmic portion of the chain corresponds to 554 to 621 (PETKGCSLEQ…GQSRQLSPEN (68 aa)).

Belongs to the major facilitator superfamily. Sugar transporter (TC 2.A.1.1) family. Glucose transporter subfamily.

The protein localises to the cell membrane. Its subcellular location is the endomembrane system. It localises to the cytoplasm. The protein resides in the perinuclear region. It carries out the reaction D-glucose(out) = D-glucose(in). Its function is as follows. Insulin-independent facilitative glucose transporter. The chain is Solute carrier family 2, facilitated glucose transporter member 12 from Macaca fascicularis (Crab-eating macaque).